We begin with the raw amino-acid sequence, 445 residues long: Mutanase Pc12g07500 (445 aa).

The signal sequence occupies residues 1–21; sequence MIWKSLFSALAILTHILPALT. Residues N386 and N437 are each glycosylated (N-linked (GlcNAc...) asparagine).

This sequence belongs to the glycosyl hydrolase 71 family. Monomer.

Its subcellular location is the secreted. It carries out the reaction Endohydrolysis of (1-&gt;3)-alpha-D-glucosidic linkages in isolichenin, pseudonigeran and nigeran.. Its function is as follows. Hydrolyzes 1,3-alpha-glucan predominantly into pentasaccharides. May enhance the efficacy of fungal antibiotics by degrading bacterial exopolysaccharides. This Penicillium rubens (strain ATCC 28089 / DSM 1075 / NRRL 1951 / Wisconsin 54-1255) (Penicillium chrysogenum) protein is Mutanase Pc12g07500.